A 365-amino-acid polypeptide reads, in one-letter code: NADH-quinone oxidoreductase subunit H 2 (365 aa).

The next 8 membrane-spanning stretches (helical) occupy residues 1 to 21 (MFVVLFVLTLILLYAVFVVWA), 71 to 91 (LAPVLIFTAIFAGFATLPFAP), 100 to 120 (VGVFFMITIVSLDVVGIFLAG), 136 to 156 (IAQVISYEIPLTLSILAVVLI), 199 to 219 (FVSWNAFKYPFLLLAYVVFFI), 254 to 274 (ILFLAEYAMMLLVAFLGVVLF), 301 to 321 (IAGYAWGLFWLISKGITVVFL), and 342 to 362 (WKILLPLSLFLVIVSGVWVVW).

This sequence belongs to the complex I subunit 1 family. As to quaternary structure, NDH-1 is composed of 14 different subunits. Subunits NuoA, H, J, K, L, M, N constitute the membrane sector of the complex.

It is found in the cell inner membrane. The enzyme catalyses a quinone + NADH + 5 H(+)(in) = a quinol + NAD(+) + 4 H(+)(out). In terms of biological role, NDH-1 shuttles electrons from NADH, via FMN and iron-sulfur (Fe-S) centers, to quinones in the respiratory chain. The immediate electron acceptor for the enzyme in this species is believed to be ubiquinone. Couples the redox reaction to proton translocation (for every two electrons transferred, four hydrogen ions are translocated across the cytoplasmic membrane), and thus conserves the redox energy in a proton gradient. This subunit may bind ubiquinone. The polypeptide is NADH-quinone oxidoreductase subunit H 2 (Cytophaga hutchinsonii (strain ATCC 33406 / DSM 1761 / CIP 103989 / NBRC 15051 / NCIMB 9469 / D465)).